The following is a 397-amino-acid chain: Cysteine desulfurase IscS (397 aa).

Pyridoxal 5'-phosphate is bound by residues 72–73 (GS), N152, Q180, and 200–202 (SAH). K203 is modified (N6-(pyridoxal phosphate)lysine). A pyridoxal 5'-phosphate-binding site is contributed by T238. Residue C328 is the Cysteine persulfide intermediate of the active site. C328 is a binding site for [2Fe-2S] cluster.

The protein belongs to the class-V pyridoxal-phosphate-dependent aminotransferase family. NifS/IscS subfamily. As to quaternary structure, homodimer. Forms a heterotetramer with IscU, interacts with other sulfur acceptors. The cofactor is pyridoxal 5'-phosphate.

The protein localises to the cytoplasm. The enzyme catalyses (sulfur carrier)-H + L-cysteine = (sulfur carrier)-SH + L-alanine. It functions in the pathway cofactor biosynthesis; iron-sulfur cluster biosynthesis. Functionally, master enzyme that delivers sulfur to a number of partners involved in Fe-S cluster assembly, tRNA modification or cofactor biosynthesis. Catalyzes the removal of elemental sulfur atoms from cysteine to produce alanine. Functions as a sulfur delivery protein for Fe-S cluster synthesis onto IscU, an Fe-S scaffold assembly protein, as well as other S acceptor proteins. This chain is Cysteine desulfurase IscS, found in Clostridium botulinum (strain Kyoto / Type A2).